A 385-amino-acid polypeptide reads, in one-letter code: tRNA-specific 2-thiouridylase MnmA (385 aa).

ATP contacts are provided by residues 18–25 and L44; that span reads AMSGGVDS. The active-site Nucleophile is the C112. A disulfide bond links C112 and C209. G136 is an ATP binding site. Positions 159-161 are interaction with tRNA; that stretch reads RDQ. Residue C209 is the Cysteine persulfide intermediate of the active site.

It belongs to the MnmA/TRMU family.

The protein resides in the cytoplasm. It catalyses the reaction S-sulfanyl-L-cysteinyl-[protein] + uridine(34) in tRNA + AH2 + ATP = 2-thiouridine(34) in tRNA + L-cysteinyl-[protein] + A + AMP + diphosphate + H(+). Catalyzes the 2-thiolation of uridine at the wobble position (U34) of tRNA, leading to the formation of s(2)U34. This is tRNA-specific 2-thiouridylase MnmA from Methylorubrum populi (strain ATCC BAA-705 / NCIMB 13946 / BJ001) (Methylobacterium populi).